The sequence spans 349 residues: Methylthioribose-1-phosphate isomerase (349 aa).

Substrate-binding positions include 49 to 51 (RGA), Arg-92, and Gln-199. Residue Asp-240 is the Proton donor of the active site. Position 250 to 251 (250 to 251 (NK)) interacts with substrate.

The protein belongs to the eIF-2B alpha/beta/delta subunits family. MtnA subfamily.

It catalyses the reaction 5-(methylsulfanyl)-alpha-D-ribose 1-phosphate = 5-(methylsulfanyl)-D-ribulose 1-phosphate. Its pathway is amino-acid biosynthesis; L-methionine biosynthesis via salvage pathway; L-methionine from S-methyl-5-thio-alpha-D-ribose 1-phosphate: step 1/6. Its function is as follows. Catalyzes the interconversion of methylthioribose-1-phosphate (MTR-1-P) into methylthioribulose-1-phosphate (MTRu-1-P). In Syntrophobacter fumaroxidans (strain DSM 10017 / MPOB), this protein is Methylthioribose-1-phosphate isomerase.